Here is a 415-residue protein sequence, read N- to C-terminus: Beta-1,4-glucuronyltransferase 1 (415 aa).

Residues 1–8 (MQMSYAIR) are Cytoplasmic-facing. The chain crosses the membrane as a helical; Signal-anchor for type II membrane protein span at residues 9–36 (CAFYQLLLAALMLVAMLQLLYLSLLSGL). At 37 to 415 (HGQEEQEQYF…ARYPNSPHRC (379 aa)) the chain is on the lumenal side. Asparagine 204 is a glycosylation site (N-linked (GlcNAc...) asparagine). Residues aspartate 227 and aspartate 229 each contribute to the Mn(2+) site. N-linked (GlcNAc...) asparagine glycosylation is present at asparagine 300.

Belongs to the glycosyltransferase 49 family. As to quaternary structure, interacts with LARGE1 and LARGE2. The cofactor is Mn(2+).

It is found in the golgi apparatus membrane. The enzyme catalyses 3-O-[beta-D-Xyl-(1-&gt;4)-Rib-ol-P-Rib-ol-P-3-beta-D-GalNAc-(1-&gt;3)-beta-D-GlcNAc-(1-&gt;4)-(O-6-P-alpha-D-Man)]-Thr-[protein] + UDP-alpha-D-glucuronate = 3-O-[beta-D-GlcA-(1-&gt;3)-beta-D-Xyl-(1-&gt;4)-Rib-ol-P-Rib-ol-P-3-beta-D-GalNAc-(1-&gt;3)-beta-D-GlcNAc-(1-&gt;4)-(O-6-P-alpha-D-Man)]-Thr-[protein] + UDP + H(+). It functions in the pathway protein modification; protein glycosylation. Beta-1,4-glucuronyltransferase involved in O-mannosylation of alpha-dystroglycan (DAG1). Transfers a glucuronic acid (GlcA) residue onto a xylose (Xyl) acceptor to produce the glucuronyl-beta-1,4-xylose-beta disaccharide primer, which is further elongated by LARGE1, during synthesis of phosphorylated O-mannosyl glycan. Phosphorylated O-mannosyl glycan is a carbohydrate structure present in alpha-dystroglycan (DAG1), which is required for binding laminin G-like domain-containing extracellular proteins with high affinity. Required for axon guidance; via its function in O-mannosylation of alpha-dystroglycan (DAG1). The polypeptide is Beta-1,4-glucuronyltransferase 1 (Mus musculus (Mouse)).